Reading from the N-terminus, the 510-residue chain is Flavonoid 3',5'-hydroxylase (510 aa).

Position 447 (Cys-447) interacts with heme.

It belongs to the cytochrome P450 family. Heme serves as cofactor.

The catalysed reaction is a 3',5'-unsubstituted flavanone + 2 reduced [NADPH--hemoprotein reductase] + 2 O2 = a 3',5'-dihydroxyflavanone + 2 oxidized [NADPH--hemoprotein reductase] + 2 H2O + 2 H(+). The protein operates within pigment biosynthesis; anthocyanin biosynthesis. In terms of biological role, catalyzes the 3'5'-hydroxylation of naringenin and eriodictyol to form 5,7,3,'4',5'-pentahydroxyflavanone and 3',5'-hydroxylation of dihydrokaempferol and dihydroquercetin to form dihydromyricetin. In Eustoma exaltatum subsp. russellianum (Bluebells), this protein is Flavonoid 3',5'-hydroxylase (CYP75A5).